The chain runs to 211 residues: 3-demethoxyubiquinol 3-hydroxylase (211 aa).

Fe cation is bound by residues Glu60, Glu90, His93, Glu142, Glu174, and His177.

It belongs to the COQ7 family. Requires Fe cation as cofactor.

The protein localises to the cell membrane. It carries out the reaction a 5-methoxy-2-methyl-3-(all-trans-polyprenyl)benzene-1,4-diol + AH2 + O2 = a 3-demethylubiquinol + A + H2O. It functions in the pathway cofactor biosynthesis; ubiquinone biosynthesis. Its function is as follows. Catalyzes the hydroxylation of 2-nonaprenyl-3-methyl-6-methoxy-1,4-benzoquinol during ubiquinone biosynthesis. The protein is 3-demethoxyubiquinol 3-hydroxylase of Francisella tularensis subsp. novicida (strain U112).